Here is a 509-residue protein sequence, read N- to C-terminus: Ribonuclease Y (509 aa).

Residues 5-25 form a helical membrane-spanning segment; the sequence is IIILLSVFCGIFFICFIICSS. Residues 199-259 enclose the KH domain; that stretch reads TTNIVKLPSD…IRREIATRTL (61 aa). Positions 325-418 constitute an HD domain; sequence VLAHSIEVAK…VAIADSISAS (94 aa).

Belongs to the RNase Y family.

Its subcellular location is the cell membrane. Its function is as follows. Endoribonuclease that initiates mRNA decay. The sequence is that of Ribonuclease Y from Mycoplasma capricolum subsp. capricolum (strain California kid / ATCC 27343 / NCTC 10154).